Reading from the N-terminus, the 304-residue chain is Acetylglutamate kinase (304 aa).

Residues 77–78 (GG), R99, and N201 each bind substrate.

Belongs to the acetylglutamate kinase family. ArgB subfamily.

The protein resides in the cytoplasm. The enzyme catalyses N-acetyl-L-glutamate + ATP = N-acetyl-L-glutamyl 5-phosphate + ADP. The protein operates within amino-acid biosynthesis; L-arginine biosynthesis; N(2)-acetyl-L-ornithine from L-glutamate: step 2/4. Its function is as follows. Catalyzes the ATP-dependent phosphorylation of N-acetyl-L-glutamate. This Methylibium petroleiphilum (strain ATCC BAA-1232 / LMG 22953 / PM1) protein is Acetylglutamate kinase.